Here is a 229-residue protein sequence, read N- to C-terminus: uncharacterized protein (229 aa).

This is an uncharacterized protein from Mus musculus (Mouse).